A 413-amino-acid chain; its full sequence is 1-deoxy-D-xylulose 5-phosphate reductoisomerase (413 aa).

Residues threonine 28, glycine 29, serine 30, isoleucine 31, glycine 54, arginine 55, asparagine 56, and asparagine 142 each coordinate NADPH. A 1-deoxy-D-xylulose 5-phosphate-binding site is contributed by lysine 143. Glutamate 144 is a binding site for NADPH. A Mn(2+)-binding site is contributed by aspartate 168. Residues serine 169, glutamate 170, serine 194, and histidine 217 each coordinate 1-deoxy-D-xylulose 5-phosphate. Glutamate 170 is a binding site for Mn(2+). Glycine 223 contacts NADPH. 1-deoxy-D-xylulose 5-phosphate is bound by residues serine 230, asparagine 235, lysine 236, and glutamate 239. A Mn(2+)-binding site is contributed by glutamate 239.

The protein belongs to the DXR family. Mg(2+) serves as cofactor. It depends on Mn(2+) as a cofactor.

The enzyme catalyses 2-C-methyl-D-erythritol 4-phosphate + NADP(+) = 1-deoxy-D-xylulose 5-phosphate + NADPH + H(+). It participates in isoprenoid biosynthesis; isopentenyl diphosphate biosynthesis via DXP pathway; isopentenyl diphosphate from 1-deoxy-D-xylulose 5-phosphate: step 1/6. Its function is as follows. Catalyzes the NADPH-dependent rearrangement and reduction of 1-deoxy-D-xylulose-5-phosphate (DXP) to 2-C-methyl-D-erythritol 4-phosphate (MEP). The chain is 1-deoxy-D-xylulose 5-phosphate reductoisomerase from Thermosynechococcus vestitus (strain NIES-2133 / IAM M-273 / BP-1).